The following is a 439-amino-acid chain: Kelch domain-containing protein 10 (439 aa).

Positions 1 to 50 are disordered; the sequence is MSAAQGWDRNRRRGGGAAGGASGVSGAGAAGGGRGTGQLNRFVQLSGRPH. Arg-13 is subject to Omega-N-methylarginine. Gly residues predominate over residues 15 to 36; the sequence is GGAAGGASGVSGAGAAGGGRGT. Kelch repeat units lie at residues 87-154, 155-198, 199-260, 261-319, 320-364, and 365-403; these read PARS…LASM, SLVL…SCRG, KRPS…RYRH, EIAH…HSCV, QIKN…VYFH, and CAAV…PSLL. An interaction with CUL2 region spans residues 398 to 439; that stretch reads VVPSLLELAWEKLLAAFPNLANLSRTQLLHLGLTQELIERLK.

The protein belongs to the KLHDC10 family. Component of a CRL2 E3 ubiquitin-protein ligase complex, also named ECS (Elongin BC-CUL2/5-SOCS-box protein) complex, composed of CUL2, Elongin BC (ELOB and ELOC), RBX1 and substrate-specific adapter KLHDC10. Interacts (via the 6 Kelch repeats) with PPP5C.

The protein localises to the nucleus. Its subcellular location is the cytoplasm. The protein operates within protein modification; protein ubiquitination. Functionally, substrate-recognition component of a Cul2-RING (CRL2) E3 ubiquitin-protein ligase complex of the DesCEND (destruction via C-end degrons) pathway, which recognizes a C-degron located at the extreme C-terminus of target proteins, leading to their ubiquitination and degradation. The C-degron recognized by the DesCEND pathway is usually a motif of less than ten residues and can be present in full-length proteins, truncated proteins or proteolytically cleaved forms. The CRL2(KLHDC10) complex specifically recognizes proteins with a proline-glycine (Pro-Gly) or an alanine tail (CAT tail) at the C-terminus, leading to their ubiquitination and degradation. The CRL2(KLHDC10) complex is involved in the ribosome-associated quality control (RQC) pathway, which mediates the extraction of incompletely synthesized nascent chains from stalled ribosomes: CRL2(KLHDC10) acts downstream of NEMF and recognizes CAT tails associated with stalled nascent chains, leading to their ubiquitination and degradation. Participates in the oxidative stress-induced cell death through MAP3K5 activation. Inhibits PPP5C phosphatase activity on MAP3K5. Acts as a regulator of necroptosis. The sequence is that of Kelch domain-containing protein 10 from Mus musculus (Mouse).